We begin with the raw amino-acid sequence, 70 residues long: ATP synthase subunit c (70 aa).

The next 2 membrane-spanning stretches (helical) occupy residues 4-24 (IAAG…NGLV) and 47-67 (FIGV…ALMV).

This sequence belongs to the ATPase C chain family. As to quaternary structure, F-type ATPases have 2 components, F(1) - the catalytic core - and F(0) - the membrane proton channel. F(1) has five subunits: alpha(3), beta(3), gamma(1), delta(1), epsilon(1). F(0) has three main subunits: a(1), b(2) and c(10-14). The alpha and beta chains form an alternating ring which encloses part of the gamma chain. F(1) is attached to F(0) by a central stalk formed by the gamma and epsilon chains, while a peripheral stalk is formed by the delta and b chains.

It is found in the cell membrane. Functionally, f(1)F(0) ATP synthase produces ATP from ADP in the presence of a proton or sodium gradient. F-type ATPases consist of two structural domains, F(1) containing the extramembraneous catalytic core and F(0) containing the membrane proton channel, linked together by a central stalk and a peripheral stalk. During catalysis, ATP synthesis in the catalytic domain of F(1) is coupled via a rotary mechanism of the central stalk subunits to proton translocation. In terms of biological role, key component of the F(0) channel; it plays a direct role in translocation across the membrane. A homomeric c-ring of between 10-14 subunits forms the central stalk rotor element with the F(1) delta and epsilon subunits. This Lactiplantibacillus plantarum (strain ATCC BAA-793 / NCIMB 8826 / WCFS1) (Lactobacillus plantarum) protein is ATP synthase subunit c.